A 156-amino-acid polypeptide reads, in one-letter code: 6,7-dimethyl-8-ribityllumazine synthase (156 aa).

5-amino-6-(D-ribitylamino)uracil contacts are provided by residues Phe22, 57–59 (AYE), and 81–83 (TVI). 86–87 (GT) contacts (2S)-2-hydroxy-3-oxobutyl phosphate. His89 acts as the Proton donor in catalysis. A 5-amino-6-(D-ribitylamino)uracil-binding site is contributed by Phe114. Arg128 is a binding site for (2S)-2-hydroxy-3-oxobutyl phosphate.

The protein belongs to the DMRL synthase family. In terms of assembly, forms an icosahedral capsid composed of 60 subunits, arranged as a dodecamer of pentamers.

The catalysed reaction is (2S)-2-hydroxy-3-oxobutyl phosphate + 5-amino-6-(D-ribitylamino)uracil = 6,7-dimethyl-8-(1-D-ribityl)lumazine + phosphate + 2 H2O + H(+). It functions in the pathway cofactor biosynthesis; riboflavin biosynthesis; riboflavin from 2-hydroxy-3-oxobutyl phosphate and 5-amino-6-(D-ribitylamino)uracil: step 1/2. In terms of biological role, catalyzes the formation of 6,7-dimethyl-8-ribityllumazine by condensation of 5-amino-6-(D-ribitylamino)uracil with 3,4-dihydroxy-2-butanone 4-phosphate. This is the penultimate step in the biosynthesis of riboflavin. The polypeptide is 6,7-dimethyl-8-ribityllumazine synthase (Proteus mirabilis (strain HI4320)).